Reading from the N-terminus, the 301-residue chain is Probable alpha-L-glutamate ligase 1 (301 aa).

One can recognise an ATP-grasp domain in the interval 104-287; the sequence is MQLMSRRGIG…VAGAIIEFVE (184 aa). Residues lysine 141, 178–179, aspartate 187, and 211–213 contribute to the ATP site; these read EY and RSN. Residues aspartate 248, glutamate 260, and asparagine 262 each contribute to the Mg(2+) site. Mn(2+) is bound by residues aspartate 248, glutamate 260, and asparagine 262.

This sequence belongs to the RimK family. Mg(2+) serves as cofactor. Requires Mn(2+) as cofactor.

In Shewanella putrefaciens (strain CN-32 / ATCC BAA-453), this protein is Probable alpha-L-glutamate ligase 1.